Consider the following 1147-residue polypeptide: MSFRSRFIHLHVHSDYSLLDGAAKISDIISKAKKCNMSHIALTDHGNLFGAIKFYKEAKKAGIKPIIGIEAYMAKTSKFLKKQDDLGKMSYHLILLAKNELGYKNLLKLTSISYLEGFYYRPRIDKDDLEKYSEGLICTSACIGGLIPRLILANRFEDAKNEILWFKKVFGNDFYLELQRHGIKDQDIVNERLVKYSRELGVPLTAANDSHYVNREDATAQDIIVCIGTGAKKSDENRLKMETNEFYIKSQEEMCELFNDLPEALENTVRIAEKCDDFKITFPGPILPDYQIPVEFNTLGEYLEHLTLEGLKFRYKNLTSKIKDRAFYELSVIIGMGFEGYFLIVWDFIKFAHDNDIPVGAGRGSGAGSIVAYALRITDIDPLKYNLLFERFLNPERISMPDFDIDFCFEGRDEIIKYVTNKYGEDKVAQIITFGTLKPKAVVKDVARVLDIPFAESNELTKFIPDGPKVSLKEVLDDNSLKECFTSKPVYKELMNAALVLEGMNRHASTHAAGIVISKTPLTDYVPLYKDYKQGSVSTQYTMDLLEECGLVKMDFLGLKTLTLIKNAENLIRSVNPDFKIKNIPDNDVKTFNMLGEGRSASVFQFESEGMQQILKDAKPDSIEDLIALNALYRPGPMQFIPQFIAAKKGVKRIKYPHPDLKEVLRPTYGVIVYQEQVMEVAKIIGGFSLGKADILRRAMGKKKEDEMNEMKVDFLRGAIEKGYDKEIASEIFELLKPFSGYGFNKSHAAAYSLIAYQTAYLKANYPEYFMAANLTNEINNNDKLSYYIEESKAIGINVLKPDINRSFREFRVTDSGISYGLNGIKNLGGIVVDLIIDEREKNGKYSSFEDFIRRVDDKVINKKFLESAIKSGLFDSLDQNRKTLFENLDHLIEVVSEDKNNKKLGQNSLFGALESQDPIQQSFNYQTFKEYSYSELLGFEKELLGFYVSGHPLDPYKKAIDSFSSLNVLTDLAAKKDSIVQFSGILNSVKVIQTKRNNAKMAFGVIEDFKGAIDIVVFTESYERYRNFLLEGNVIGVVGRLTFNRDKFSIVVEKVVNIERLSEYKINNIHIKFLNNKLNDLQLLNSLKESISNFEDNSGFSNVYFYLRENGKDLKLKMNSILNFVPDEDKLDKLRKCVIVEDVWVD.

The protein belongs to the DNA polymerase type-C family. DnaE subfamily. In terms of assembly, DNA polymerase III contains a core (composed of alpha, epsilon and theta chains) that associates with a tau subunit. This core dimerizes to form the PolIII' complex. PolIII' associates with the gamma complex (composed of gamma, delta, delta', psi and chi chains) and with the beta chain to form the complete DNA polymerase III complex.

Its subcellular location is the cytoplasm. It carries out the reaction DNA(n) + a 2'-deoxyribonucleoside 5'-triphosphate = DNA(n+1) + diphosphate. Functionally, DNA polymerase III is a complex, multichain enzyme responsible for most of the replicative synthesis in bacteria. This DNA polymerase also exhibits 3' to 5' exonuclease activity. The alpha chain is the DNA polymerase. The chain is DNA polymerase III subunit alpha (dnaE) from Borreliella burgdorferi (strain ATCC 35210 / DSM 4680 / CIP 102532 / B31) (Borrelia burgdorferi).